A 493-amino-acid chain; its full sequence is Cytochrome P450 2A9 (493 aa).

Heme is bound at residue Cys438.

The protein belongs to the cytochrome P450 family. Requires heme as cofactor. In terms of tissue distribution, liver.

The protein resides in the endoplasmic reticulum membrane. It localises to the microsome membrane. It catalyses the reaction an organic molecule + reduced [NADPH--hemoprotein reductase] + O2 = an alcohol + oxidized [NADPH--hemoprotein reductase] + H2O + H(+). In terms of biological role, cytochromes P450 are a group of heme-thiolate monooxygenases. In liver microsomes, this enzyme is involved in an NADPH-dependent electron transport pathway. It oxidizes a variety of structurally unrelated compounds, including steroids, fatty acids, and xenobiotics. This Mesocricetus auratus (Golden hamster) protein is Cytochrome P450 2A9 (CYP2A9).